A 436-amino-acid polypeptide reads, in one-letter code: 3-ketoacyl-CoA thiolase (436 aa).

C99 serves as the catalytic Acyl-thioester intermediate. Catalysis depends on proton acceptor residues H392 and C422.

It belongs to the thiolase-like superfamily. Thiolase family. As to quaternary structure, heterotetramer of two alpha chains (FadJ) and two beta chains (FadI).

It is found in the cytoplasm. The catalysed reaction is an acyl-CoA + acetyl-CoA = a 3-oxoacyl-CoA + CoA. It participates in lipid metabolism; fatty acid beta-oxidation. Its function is as follows. Catalyzes the final step of fatty acid oxidation in which acetyl-CoA is released and the CoA ester of a fatty acid two carbons shorter is formed. This is 3-ketoacyl-CoA thiolase from Escherichia coli (strain SMS-3-5 / SECEC).